The following is a 312-amino-acid chain: Probable HTH-type transcriptional regulator LrhA (312 aa).

Positions 11–68 constitute an HTH lysR-type domain; sequence LDLDLLRTFVAVADLNTFAAAAAAVCRTQSAVSQQMQRLEQLVGKELFARHGRNKLLT. Positions 28 to 47 form a DNA-binding region, H-T-H motif; that stretch reads FAAAAAAVCRTQSAVSQQMQ.

Belongs to the LysR transcriptional regulatory family.

Not known, does not seem to act on the proton translocating NADH dehydrogenase genes (nuoA-N) which are part of the lrhA operon. The polypeptide is Probable HTH-type transcriptional regulator LrhA (lrhA) (Escherichia coli (strain K12)).